We begin with the raw amino-acid sequence, 711 residues long: DNA ligase (711 aa).

The tract at residues 1 to 29 (MSEDAIGQQVPAAQEAAAGAEPNSAARER) is disordered. Low complexity predominate over residues 12–25 (AAQEAAAGAEPNSA). Residues 54–58 (DAAFD), 103–104 (SL), and E133 contribute to the NAD(+) site. K135 serves as the catalytic N6-AMP-lysine intermediate. NAD(+) is bound by residues R156, E197, K313, and K337. Positions 431, 434, 450, and 456 each coordinate Zn(2+). One can recognise a BRCT domain in the interval 620–709 (QGPRPLEGVT…PEAARAVARV (90 aa)).

This sequence belongs to the NAD-dependent DNA ligase family. LigA subfamily. Requires Mg(2+) as cofactor. The cofactor is Mn(2+).

It carries out the reaction NAD(+) + (deoxyribonucleotide)n-3'-hydroxyl + 5'-phospho-(deoxyribonucleotide)m = (deoxyribonucleotide)n+m + AMP + beta-nicotinamide D-nucleotide.. Its function is as follows. DNA ligase that catalyzes the formation of phosphodiester linkages between 5'-phosphoryl and 3'-hydroxyl groups in double-stranded DNA using NAD as a coenzyme and as the energy source for the reaction. It is essential for DNA replication and repair of damaged DNA. The polypeptide is DNA ligase (Salinispora tropica (strain ATCC BAA-916 / DSM 44818 / JCM 13857 / NBRC 105044 / CNB-440)).